A 684-amino-acid chain; its full sequence is Histone-lysine N-methyltransferase SETMAR (684 aa).

Residues 1–345 are histone-lysine N-methyltransferase; it reads MFAEAAKTTR…RLTLETMKMM (345 aa). Residues 73-136 form the Pre-SET domain; sequence PGCICVKTPC…HCRNRVVQKG (64 aa). Zn(2+) is bound by residues C75, C77, C82, C87, C89, C118, C122, C124, and C128. An SET domain is found at 139-263; that stretch reads FHFQVFKTHK…PEEELSYDYS (125 aa). S-adenosyl-L-methionine-binding positions include 149–151, Y192, R220, and 223–224; these read KGW and NH. Residues C226, C287, C289, and C294 each coordinate Zn(2+). In terms of domain architecture, Post-SET spans 283-299; that stretch reads LRKPCYCGAKSCTAFLP. Residues 346–684 are mariner transposase Hsmar1; that stretch reads LDKKQIRAIF…CVDCNGSYFD (339 aa). 2 consecutive DNA-binding regions (H-T-H motif) follow at residues 364 to 395 and 428 to 448; these read KAAETTRNINNAFGPGTANERTVQWWFKKFCK and TTREVAEELNVNHSTVVRHLK. A Mg(2+)-binding site is contributed by D496. K498 is subject to N6-methyllysine. At S508 the chain carries Phosphoserine; by CHEK1. D588 serves as a coordination point for Mg(2+).

The protein in the N-terminal section; belongs to the class V-like SAM-binding methyltransferase superfamily. This sequence in the C-terminal section; belongs to the mariner transposase family. As to quaternary structure, homodimer. Interacts with PRPF19; required for SETMAR recruitment to damaged DNA sites. Interacts with PCNA. Interacts with TOP2A; stimulates TOP2A topoisomerase activity. May interact with RAD9A and/or RAD9B. The cofactor is Mg(2+). In terms of processing, methylated. Methylation regulates activity in DNA decatenation. Post-translationally, phosphorylated at Ser-508 by CHEK1 and dephosphorylated by protein phosphatase 2A/PP2A. Phosphorylation at Ser-508 is enhanced by DNA damage and promotes recruitment to damaged DNA. It stimulates DNA repair and impairs replication fork restart. As to expression, widely expressed, with highest expression in placenta and ovary and lowest expression in skeletal muscle.

The protein localises to the nucleus. It localises to the chromosome. It carries out the reaction L-lysyl(36)-[histone H3] + 2 S-adenosyl-L-methionine = N(6),N(6)-dimethyl-L-lysyl(36)-[histone H3] + 2 S-adenosyl-L-homocysteine + 2 H(+). Its function is as follows. Protein derived from the fusion of a methylase with the transposase of an Hsmar1 transposon that plays a role in DNA double-strand break repair, stalled replication fork restart and DNA integration. DNA-binding protein, it is indirectly recruited to sites of DNA damage through protein-protein interactions. Also has kept a sequence-specific DNA-binding activity recognizing the 19-mer core of the 5'-terminal inverted repeats (TIRs) of the Hsmar1 element and displays a DNA nicking and end joining activity. In parallel, has a histone methyltransferase activity and methylates 'Lys-4' and 'Lys-36' of histone H3. Specifically mediates dimethylation of H3 'Lys-36' at sites of DNA double-strand break and may recruit proteins required for efficient DSB repair through non-homologous end-joining. Also regulates replication fork processing, promoting replication fork restart and regulating DNA decatenation through stimulation of the topoisomerase activity of TOP2A. In Homo sapiens (Human), this protein is Histone-lysine N-methyltransferase SETMAR.